A 351-amino-acid chain; its full sequence is Molybdenum import ATP-binding protein ModC (351 aa).

In terms of domain architecture, ABC transporter spans 1–229 (MLKINVKKQL…PLFLPWKLED (229 aa)). 31 to 38 (GLSGSGKT) contacts ATP. In terms of domain architecture, Mop spans 289–351 (KTSIRNILHG…FAQIKAVSVL (63 aa)).

Belongs to the ABC transporter superfamily. Molybdate importer (TC 3.A.1.8) family. In terms of assembly, the complex is composed of two ATP-binding proteins (ModC), two transmembrane proteins (ModB) and a solute-binding protein (ModA).

Its subcellular location is the cell inner membrane. The catalysed reaction is molybdate(out) + ATP + H2O = molybdate(in) + ADP + phosphate + H(+). In terms of biological role, part of the ABC transporter complex ModABC involved in molybdenum import. Responsible for energy coupling to the transport system. In Pasteurella multocida (strain Pm70), this protein is Molybdenum import ATP-binding protein ModC.